Consider the following 575-residue polypeptide: Urease subunit alpha (575 aa).

A Urease domain is found at 137–575 (GGIDCHIHFI…LPMTQRYFLF (439 aa)). Ni(2+)-binding residues include His-142, His-144, and Lys-225. Lys-225 is subject to N6-carboxylysine. Substrate is bound at residue His-227. Ni(2+)-binding residues include His-254 and His-280. The active-site Proton donor is the His-328. Asp-368 contacts Ni(2+).

Belongs to the metallo-dependent hydrolases superfamily. Urease alpha subunit family. In terms of assembly, heterotrimer of UreA (gamma), UreB (beta) and UreC (alpha) subunits. Three heterotrimers associate to form the active enzyme. Ni cation is required as a cofactor. In terms of processing, carboxylation allows a single lysine to coordinate two nickel ions.

Its subcellular location is the cytoplasm. The enzyme catalyses urea + 2 H2O + H(+) = hydrogencarbonate + 2 NH4(+). Its pathway is nitrogen metabolism; urea degradation; CO(2) and NH(3) from urea (urease route): step 1/1. This Methylibium petroleiphilum (strain ATCC BAA-1232 / LMG 22953 / PM1) protein is Urease subunit alpha.